The chain runs to 385 residues: V-type proton ATPase subunit C (385 aa).

This sequence belongs to the V-ATPase C subunit family. In terms of assembly, V-ATPase is a heteromultimeric enzyme made up of two complexes: the ATP-hydrolytic V1 complex and the proton translocation V0 complex. The V1 complex consists of three catalytic AB heterodimers that form a heterohexamer, three peripheral stalks each consisting of EG heterodimers, one central rotor including subunits D and F, and the regulatory subunits C and H. The proton translocation complex V0 consists of the proton transport subunit a, a ring of proteolipid subunits c9c'', rotary subunit d, subunits e and f, and the accessory subunits VhaAC45 and ATP6AP2.

Its function is as follows. Subunit of the V1 complex of vacuolar(H+)-ATPase (V-ATPase), a multisubunit enzyme composed of a peripheral complex (V1) that hydrolyzes ATP and a membrane integral complex (V0) that translocates protons. V-ATPase is responsible for acidifying and maintaining the pH of intracellular compartments and in some cell types, is targeted to the plasma membrane, where it is responsible for acidifying the extracellular environment. Subunit C is necessary for the assembly of the catalytic sector of the enzyme and is likely to have a specific function in its catalytic activity. The chain is V-type proton ATPase subunit C from Manduca sexta (Tobacco hawkmoth).